An 874-amino-acid polypeptide reads, in one-letter code: DNA mismatch repair protein MutS (874 aa).

630–637 lines the ATP pocket; it reads GPNMAGKS.

Belongs to the DNA mismatch repair MutS family.

Its function is as follows. This protein is involved in the repair of mismatches in DNA. It is possible that it carries out the mismatch recognition step. This protein has a weak ATPase activity. The protein is DNA mismatch repair protein MutS of Chlorobium phaeovibrioides (strain DSM 265 / 1930) (Prosthecochloris vibrioformis (strain DSM 265)).